The primary structure comprises 867 residues: Protein melted homolog (867 aa).

The disordered stretch occupies residues 480-505 (MPSSSRTNVHLSQAASSSRGHSLPQT). Positions 753 to 860 (EKVLEGQLKE…WLHCLQIAMA (108 aa)) constitute a PH domain.

This sequence belongs to the MELT/VEPH family.

It is found in the cell membrane. The polypeptide is Protein melted homolog (Caenorhabditis briggsae).